We begin with the raw amino-acid sequence, 86 residues long: Anti-adapter protein IraP (86 aa).

Residues 1-47 (MKNLIAELLLKLAQKEEESKELVAQVEALEIIVTAMLRNMAQSEQQM) are a coiled coil.

The protein belongs to the IraP family. In terms of assembly, interacts with RssB.

It is found in the cytoplasm. Functionally, inhibits RpoS proteolysis by regulating RssB activity, thereby increasing the stability of the sigma stress factor RpoS especially during phosphate and magnesium starvation, but also in stationary phase and during nitrogen starvation. Its effect on RpoS stability is due to its interaction with RssB, which probably blocks the interaction of RssB with RpoS, and the consequent delivery of the RssB-RpoS complex to the ClpXP protein degradation pathway. The sequence is that of Anti-adapter protein IraP from Salmonella arizonae (strain ATCC BAA-731 / CDC346-86 / RSK2980).